The sequence spans 80 residues: Raniseptin-1 (80 aa).

Residues 1-22 (MAFLKKSLFLVLFLGIVSLSIC) form the signal peptide. Positions 23 to 49 (EEEKREGEEEEKQEEENEELSEEELRE) are excised as a propeptide.

Belongs to the frog skin active peptide (FSAP) family. Dermaseptin subfamily. Expressed by the skin glands.

It is found in the secreted. Has antibacterial activity against the Gram-negative bacteria E.coli ATCC 25922 (MIC=5 uM), P.aeruginosa ATCC 27853 (MIC=10 uM) and X.citri (MIC&lt; 2 uM), and the Gram-positive bacterium S.aureus ATCC 29313 (MIC=20 uM). Does not have hemolytic activity against human erythrocytes. The sequence is that of Raniseptin-1 from Boana raniceps (Chaco tree frog).